The primary structure comprises 150 residues: Ribosome maturation factor RimP (150 aa).

The protein belongs to the RimP family.

The protein localises to the cytoplasm. Functionally, required for maturation of 30S ribosomal subunits. The polypeptide is Ribosome maturation factor RimP (Thermotoga sp. (strain RQ2)).